Reading from the N-terminus, the 504-residue chain is Cytochrome P450 2D10 (504 aa).

Serine 382 carries an O-linked (GlcNAc) serine glycan. Cysteine 446 provides a ligand contact to heme.

This sequence belongs to the cytochrome P450 family. The cofactor is heme.

The protein localises to the endoplasmic reticulum membrane. It is found in the microsome membrane. It catalyses the reaction an organic molecule + reduced [NADPH--hemoprotein reductase] + O2 = an alcohol + oxidized [NADPH--hemoprotein reductase] + H2O + H(+). In terms of biological role, cytochromes P450 are a group of heme-thiolate monooxygenases. In liver microsomes, this enzyme is involved in an NADPH-dependent electron transport pathway. It oxidizes a variety of structurally unrelated compounds, including steroids, fatty acids, and xenobiotics. This chain is Cytochrome P450 2D10 (Cyp2d10), found in Rattus norvegicus (Rat).